Consider the following 196-residue polypeptide: Probable malonic semialdehyde reductase RutE (196 aa).

It belongs to the nitroreductase family. HadB/RutE subfamily. It depends on FMN as a cofactor.

The enzyme catalyses 3-hydroxypropanoate + NADP(+) = 3-oxopropanoate + NADPH + H(+). May reduce toxic product malonic semialdehyde to 3-hydroxypropionic acid, which is excreted. The polypeptide is Probable malonic semialdehyde reductase RutE (Shigella dysenteriae serotype 1 (strain Sd197)).